The sequence spans 418 residues: Caveolae-associated protein 2 (418 aa).

The interval 1–42 is disordered; the sequence is MGEDAAQAEKFQHPNTDMLQEKPSSPSPMPSSTPSPSLNLGS. N-acetylglycine is present on glycine 2. The tract at residues 2-168 is interaction with CAVIN1; that stretch reads GEDAAQAEKF…IFQEESEIPA (167 aa). Phosphoserine is present on residues serine 27, serine 35, serine 37, and serine 51. Coiled coils occupy residues 61–87 and 126–268; these read LLDK…INLE and RAVR…VERR. The leucine-zipper stretch occupies residues 62–100; sequence LDKLVNMLDAVRENQHNMEQRQINLEGSVKGIQNDLTKL. At threonine 196 the chain carries Phosphothreonine. Disordered stretches follow at residues 200–238 and 262–382; these read VDLS…SLKK and IVSV…ALQQ. Phosphoserine is present on residues serine 203, serine 204, and serine 218. Residues 203-219 are compositionally biased toward acidic residues; it reads SSDDELPRDEEALEDSA. Residues 220–238 show a composition bias toward basic and acidic residues; that stretch reads EEKMEESRAEKIKRSSLKK. The segment covering 275–287 has biased composition (polar residues); the sequence is LTPNHQKASSGKS. Serine 283, serine 284, serine 287, serine 288, serine 293, and serine 296 each carry phosphoserine. Over residues 303 to 321 the composition is skewed to basic and acidic residues; sequence REGESSVENETKLEDQMQE. Residues serine 327, serine 336, serine 359, and serine 363 each carry the phosphoserine modification. Positions 355 to 366 are enriched in polar residues; sequence RGNNSAVGSNAD. Threonine 368 carries the post-translational modification Phosphothreonine. A compositionally biased stretch (acidic residues) spans 368-377; it reads TIEEDEEEEP. A Phosphotyrosine modification is found at tyrosine 388. 2 positions are modified to phosphoserine: serine 390 and serine 396. Residues 396–418 are disordered; sequence SEEMEEPSEKQVQPAVLHVDQTA.

The protein belongs to the CAVIN family. In terms of assembly, component of the CAVIN complex composed of CAVIN1, CAVIN2, CAVIN3 and CAVIN4. Binds to PRKCA in the presence of phosphatidylserine. Interacts with CAVIN4; this augments the transactivation of NPPA by CAVIN4. Interacts with CAVIN1. Interacts with CAV3. Post-translationally, the N-terminus is blocked. In terms of tissue distribution, heart, adipose tissue, lung and endothelial cells (at protein level). Highly expressed in kidney and expressed at lower levels in liver, spleen, thymus, stomach, intestine and uterus.

It localises to the cytoplasm. Its subcellular location is the cytosol. The protein localises to the membrane. It is found in the caveola. Its function is as follows. Plays an important role in caveolar biogenesis and morphology. Regulates caveolae morphology by inducing membrane curvature within caveolae. Plays a role in caveola formation in a tissue-specific manner. Required for the formation of caveolae in the lung and fat endothelia but not in the heart endothelia. Negatively regulates the size or stability of CAVIN complexes in the lung endothelial cells. May play a role in targeting PRKCA to caveolae. The polypeptide is Caveolae-associated protein 2 (Cavin2) (Mus musculus (Mouse)).